The primary structure comprises 337 residues: Transaldolase (337 aa).

Lys-115 carries the post-translational modification N6-acetyllysine. The active-site Schiff-base intermediate with substrate is Lys-142. At Lys-219 the chain carries N6-acetyllysine. Phosphoserine is present on residues Ser-237 and Ser-256. N6-acetyllysine occurs at positions 269, 286, and 321.

The protein belongs to the transaldolase family. Type 1 subfamily. Homodimer.

It localises to the cytoplasm. The catalysed reaction is D-sedoheptulose 7-phosphate + D-glyceraldehyde 3-phosphate = D-erythrose 4-phosphate + beta-D-fructose 6-phosphate. It participates in carbohydrate degradation; pentose phosphate pathway; D-glyceraldehyde 3-phosphate and beta-D-fructose 6-phosphate from D-ribose 5-phosphate and D-xylulose 5-phosphate (non-oxidative stage): step 2/3. In terms of biological role, transaldolase is important for the balance of metabolites in the pentose-phosphate pathway. This is Transaldolase (TALDO1) from Bos taurus (Bovine).